A 264-amino-acid polypeptide reads, in one-letter code: MGDSDDFYWNWNNEAVCNWIEQLGFPHKEAFEDYHILGKDIDLLSSNDLRDMGIESVGHRIDILSAIQSMKKQQKDKLQQENKDQELKNIEESYKKLEEKTEHLSDDNVSLEKRVEYLETENTKLVKTLNSLNSEFLQLLRKIAINVKEGRQLTTENSSDTSSMTHPVQPSPSVLGSFDLEVNDSLTNAEKNRKLNVNLTYNEVLCSMLQRYRIDPNTWMSYDLLINYDDKEHAIPMDVKPLQLFRNLQKRGKSPSFVLSRRSC.

An SAM domain is found at 11–73 (WNNEAVCNWI…LSAIQSMKKQ (63 aa)). The segment at 111-139 (LEKRVEYLETENTKLVKTLNSLNSEFLQL) is leucine-zipper. The region spanning 176 to 264 (GSFDLEVNDS…PSFVLSRRSC (89 aa)) is the Ras-associating domain.

As to quaternary structure, homodimer or heterodimer with another leucine-zipper protein.

Functionally, essential for mating and meiosis. This Schizosaccharomyces pombe (strain 972 / ATCC 24843) (Fission yeast) protein is Sexual differentiation protein ste4 (ste4).